A 275-amino-acid polypeptide reads, in one-letter code: Diaminopimelate epimerase (275 aa).

Substrate is bound by residues Asn12, Gln45, and Asn65. Cys74 serves as the catalytic Proton donor. Residues 75 to 76 (GN), Asn158, Asn191, and 209 to 210 (ER) contribute to the substrate site. The active-site Proton acceptor is Cys218. Substrate is bound at residue 219–220 (GT).

This sequence belongs to the diaminopimelate epimerase family. As to quaternary structure, homodimer.

The protein resides in the cytoplasm. It catalyses the reaction (2S,6S)-2,6-diaminopimelate = meso-2,6-diaminopimelate. It participates in amino-acid biosynthesis; L-lysine biosynthesis via DAP pathway; DL-2,6-diaminopimelate from LL-2,6-diaminopimelate: step 1/1. In terms of biological role, catalyzes the stereoinversion of LL-2,6-diaminopimelate (L,L-DAP) to meso-diaminopimelate (meso-DAP), a precursor of L-lysine and an essential component of the bacterial peptidoglycan. This is Diaminopimelate epimerase from Shewanella oneidensis (strain ATCC 700550 / JCM 31522 / CIP 106686 / LMG 19005 / NCIMB 14063 / MR-1).